The sequence spans 305 residues: Aspartate carbamoyltransferase catalytic subunit (305 aa).

Residues Arg-60 and Thr-61 each contribute to the carbamoyl phosphate site. Lys-88 is a binding site for L-aspartate. Positions 110, 138, and 141 each coordinate carbamoyl phosphate. Arg-171 and Arg-222 together coordinate L-aspartate. 2 residues coordinate carbamoyl phosphate: Ala-263 and Pro-264.

It belongs to the aspartate/ornithine carbamoyltransferase superfamily. ATCase family. As to quaternary structure, heterododecamer (2C3:3R2) of six catalytic PyrB chains organized as two trimers (C3), and six regulatory PyrI chains organized as three dimers (R2).

It catalyses the reaction carbamoyl phosphate + L-aspartate = N-carbamoyl-L-aspartate + phosphate + H(+). It participates in pyrimidine metabolism; UMP biosynthesis via de novo pathway; (S)-dihydroorotate from bicarbonate: step 2/3. Catalyzes the condensation of carbamoyl phosphate and aspartate to form carbamoyl aspartate and inorganic phosphate, the committed step in the de novo pyrimidine nucleotide biosynthesis pathway. This Halalkalibacterium halodurans (strain ATCC BAA-125 / DSM 18197 / FERM 7344 / JCM 9153 / C-125) (Bacillus halodurans) protein is Aspartate carbamoyltransferase catalytic subunit.